The following is a 115-amino-acid chain: Large ribosomal subunit protein uL24 (115 aa).

2 disordered regions span residues 45 to 77 (VRQS…STGK) and 96 to 115 (KASG…KAAS).

It belongs to the universal ribosomal protein uL24 family. Part of the 50S ribosomal subunit.

In terms of biological role, one of two assembly initiator proteins, it binds directly to the 5'-end of the 23S rRNA, where it nucleates assembly of the 50S subunit. One of the proteins that surrounds the polypeptide exit tunnel on the outside of the subunit. In Rhodopirellula baltica (strain DSM 10527 / NCIMB 13988 / SH1), this protein is Large ribosomal subunit protein uL24.